The primary structure comprises 193 residues: Protein GrpE (193 aa).

Residues 1–26 (MTKKHHKEQEEIQETIKTEAAEENVG) are disordered. The span at 7 to 20 (KEQEEIQETIKTEA) shows a compositional bias: basic and acidic residues.

This sequence belongs to the GrpE family. In terms of assembly, homodimer.

It is found in the cytoplasm. In terms of biological role, participates actively in the response to hyperosmotic and heat shock by preventing the aggregation of stress-denatured proteins, in association with DnaK and GrpE. It is the nucleotide exchange factor for DnaK and may function as a thermosensor. Unfolded proteins bind initially to DnaJ; upon interaction with the DnaJ-bound protein, DnaK hydrolyzes its bound ATP, resulting in the formation of a stable complex. GrpE releases ADP from DnaK; ATP binding to DnaK triggers the release of the substrate protein, thus completing the reaction cycle. Several rounds of ATP-dependent interactions between DnaJ, DnaK and GrpE are required for fully efficient folding. The chain is Protein GrpE from Chlorobaculum parvum (strain DSM 263 / NCIMB 8327) (Chlorobium vibrioforme subsp. thiosulfatophilum).